A 644-amino-acid chain; its full sequence is Core protein VP4 (644 aa).

This sequence belongs to the orbivirus VP4 family.

The protein localises to the virion. Functionally, the VP4 protein is one of the five proteins (with VP1, VP3, VP6 and VP7) which form the inner capsid of the virus. In Bluetongue virus 11 (isolate USA) (BTV 11), this protein is Core protein VP4 (Segment-4).